Consider the following 1806-residue polypeptide: MEPWSSRWKTKRWLWDFTVTTLALTFLFQAREVRGAAPVDVLKALDFHNSPEGISKTTGFCTNRKNSKGSDTAYRVSKQAQLSAPTKQLFPGGTFPEDFSILFTVKPKKGIQSFLLSIYNEHGIQQIGVEVGRSPVFLFEDHTGKPAPEDYPLFRTVNIADGKWHRVAISVEKKTVTMIVDCKKKTTKPLDRSERAIVDTNGITVFGTRILDEEVFEGDIQQFLITGDPKAAYDYCEHYSPDCDSSAPKAAQAQEPQIDEYAPEDIIEYDYEYGEAEYKEAESVTEGPTVTEETIAQTEANIVDDFQEYNYGTMESYQTEAPRHVSGTNEPNPVEEIFTEEYLTGEDYDSQRKNSEDTLYENKEIDGRDSDLLVDGDLGEYDFYEYKEYEDKPTSPPNEEFGPGVPAETDITETSINGHGAYGEKGQKGEPAVVEPGMLVEGPPGPAGPAGIMGPPGLQGPTGPPGDPGDRGPPGRPGLPGADGLPGPPGTMLMLPFRYGGDGSKGPTISAQEAQAQAILQQARIALRGPPGPMGLTGRPGPVGGPGSSGAKGESGDPGPQGPRGVQGPPGPTGKPGKRGRPGADGGRGMPGEPGAKGDRGFDGLPGLPGDKGHRGERGPQGPPGPPGDDGMRGEDGEIGPRGLPGEAGPRGLLGPRGTPGAPGQPGMAGVDGPPGPKGNMGPQGEPGPPGQQGNPGPQGLPGPQGPIGPPGEKGPQGKPGLAGLPGADGPPGHPGKEGQSGEKGALGPPGPQGPIGYPGPRGVKGADGVRGLKGSKGEKGEDGFPGFKGDMGLKGDRGEVGQIGPRGEDGPEGPKGRAGPTGDPGPSGQAGEKGKLGVPGLPGYPGRQGPKGSTGFPGFPGANGEKGARGVAGKPGPRGQRGPTGPRGSRGARGPTGKPGPKGTSGGDGPPGPPGERGPQGPQGPVGFPGPKGPPGPPGKDGLPGHPGQRGETGFQGKTGPPGPGGVVGPQGPTGETGPIGERGHPGPPGPPGEQGLPGAAGKEGAKGDPGPQGISGKDGPAGLRGFPGERGLPGAQGAPGLKGGEGPQGPPGPVGSPGERGSAGTAGPIGLPGRPGPQGPPGPAGEKGAPGEKGPQGPAGRDGVQGPVGLPGPAGPAGSPGEDGDKGEIGEPGQKGSKGDKGENGPPGPPGLQGPVGAPGIAGGDGEPGPRGQQGMFGQKGDEGARGFPGPPGPIGLQGLPGPPGEKGENGDVGPMGPPGPPGPRGPQGPNGADGPQGPPGSVGSVGGVGEKGEPGEAGNPGPPGEAGVGGPKGERGEKGEAGPPGAAGPPGAKGPPGDDGPKGNPGPVGFPGDPGPPGEPGPAGQDGVGGDKGEDGDPGQPGPPGPSGEAGPPGPPGKRGPPGAAGAEGRQGEKGAKGEAGAEGPPGKTGPVGPQGPAGKPGPEGLRGIPGPVGEQGLPGAAGQDGPPGPMGPPGLPGLKGDPGSKGEKGHPGLIGLIGPPGEQGEKGDRGLPGTQGSPGAKGDGGIPGPAGPLGPPGPPGLPGPQGPKGNKGSTGPAGQKGDSGLPGPPGSPGPPGEVIQPLPILSSKKTRRHTEGMQADADDNILDYSDGMEEIFGSLNSLKQDIEHMKFPMGTQTNPARTCKDLQLSHPDFPDGEYWIDPNQGCSGDSFKVYCNFTSGGETCIYPDKKSEGVRISSWPKEKPGSWFSEFKRGKLLSYLDVEGNSINMVQMTFLKLLTASARQNFTYHCHQSAAWYDVSSGSYDKALRFLGSNDEEMSYDNNPFIKTLYDGCASRKGYEKTVIEINTPKIDQVPIVDVMINDFGDQNQKFGFEVGPVCFLG.

The N-terminal stretch at 1–35 (MEPWSSRWKTKRWLWDFTVTTLALTFLFQAREVRG) is a signal peptide. The propeptide at 36-511 (AAPVDVLKAL…DGSKGPTISA (476 aa)) is N-terminal propeptide. Disulfide bonds link C61/C243 and C182/C236. The Laminin G-like domain occupies 71 to 243 (DTAYRVSKQA…DYCEHYSPDC (173 aa)). The tract at residues 230–419 (KAAYDYCEHY…DITETSINGH (190 aa)) is nonhelical region. Residues 420-508 (GAYGEKGQKG…YGGDGSKGPT (89 aa)) form a triple-helical region (interrupted) region. Residues 439–508 (LVEGPPGPAG…YGGDGSKGPT (70 aa)) form a disordered region. Residues 442 to 490 (GPPGPAGPAGIMGPPGLQGPTGPPGDPGDRGPPGRPGLPGADGLPGPPG) enclose the Collagen-like 1 domain. Composition is skewed to low complexity over residues 449–461 (PAGI…LQGP) and 479–496 (LPGA…LMLP). Positions 509-511 (ISA) are short nonhelical segment. A telopeptide region spans residues 512 to 528 (QEAQAQAILQQARIALR). The interval 528–1563 (RGPPGPMGLT…TRRHTEGMQA (1036 aa)) is disordered. The tract at residues 529–1542 (GPPGPMGLTG…PGSPGPPGEV (1014 aa)) is triple-helical region. 4 consecutive Collagen-like domains span residues 532 to 586 (GPMG…GADG), 583 to 641 (GADG…EIGP), 616 to 674 (GERG…VDGP), and 643 to 699 (GLPG…PGPQ). Composition is skewed to gly residues over residues 541 to 550 (GPVGGPGSSG) and 583 to 592 (GADGGRGMPG). K612 is subject to Allysine. Low complexity predominate over residues 641-662 (PRGLPGEAGPRGLLGPRGTPGA). Pro residues predominate over residues 699-710 (QGLPGPQGPIGP). A compositionally biased stretch (low complexity) spans 717 to 728 (QGKPGLAGLPGA). A compositionally biased stretch (basic and acidic residues) spans 807 to 816 (RGEDGPEGPK). 6 stretches are compositionally biased toward low complexity: residues 875–903 (KPGP…PGPK), 918–927 (RGPQGPQGPV), 941–960 (KDGL…QGKT), 971–981 (PQGPTGETGPI), 1032–1041 (RGLPGAQGAP), and 1058–1074 (SPGE…IGLP). A compositionally biased stretch (pro residues) spans 1076–1085 (RPGPQGPPGP). Residues 1086 to 1110 (AGEKGAPGEKGPQGPAGRDGVQGPV) show a composition bias toward low complexity. Gly residues predominate over residues 1162-1171 (GIAGGDGEPG). Pro residues-rich tracts occupy residues 1218 to 1229 (MGPPGPPGPRGP) and 1343 to 1362 (QPGP…PGKR). 2 stretches are compositionally biased toward low complexity: residues 1385 to 1394 (AEGPPGKTGP) and 1419 to 1428 (QGLPGAAGQD). 3 consecutive Collagen-like domains span residues 1393–1450 (GPVG…GSKG), 1429–1487 (GPPG…AKGD), and 1483–1541 (GAKG…PPGE). The span at 1430–1439 (PPGPMGPPGL) shows a compositional bias: pro residues. At K1452 the chain carries Allysine. Over residues 1455-1464 (PGLIGLIGPP) the composition is skewed to low complexity. The span at 1483–1492 (GAKGDGGIPG) shows a compositional bias: gly residues. Pro residues-rich tracts occupy residues 1493-1509 (PAGP…PGPQ) and 1530-1539 (PGPPGSPGPP). The segment at 1543–1563 (IQPLPILSSKKTRRHTEGMQA) is nonhelical region (C-terminal). A propeptide spans 1564-1806 (DADDNILDYS…FEVGPVCFLG (243 aa)) (C-terminal propeptide). Residues 1577–1805 (EEIFGSLNSL…GFEVGPVCFL (229 aa)) enclose the Fibrillar collagen NC1 domain. Cysteines 1607 and 1639 form a disulfide. D1625, N1627, Q1628, C1630, and D1633 together coordinate Ca(2+). N-linked (GlcNAc...) asparagine glycosylation occurs at N1640. Intrachain disulfides connect C1648/C1803 and C1714/C1757.

Belongs to the fibrillar collagen family. Trimers composed of three different chains: alpha 1(XI), alpha 2(XI), and alpha 3(XI). Alpha 3(XI) is a post-translational modification of alpha 1(II). Alpha 1(V) can also be found instead of alpha 3(XI)=1(II). Prolines at the third position of the tripeptide repeating unit (G-X-Y) are hydroxylated in some or all of the chains. Post-translationally, N-glycosylated. As to expression, cartilage, placenta and some tumor or virally transformed cell lines. Isoforms using exon IIA or IIB are found in the cartilage while isoforms using only exon IIB are found in the tendon.

It is found in the secreted. The protein localises to the extracellular space. The protein resides in the extracellular matrix. May play an important role in fibrillogenesis by controlling lateral growth of collagen II fibrils. This chain is Collagen alpha-1(XI) chain (COL11A1), found in Homo sapiens (Human).